The primary structure comprises 483 residues: NADH-quinone oxidoreductase subunit N (483 aa).

Helical transmembrane passes span 7-27 (AILTPEIVLSLFAMAGLLGAV), 33-53 (ALASAMCWGTAALFIIMAFYI), 76-96 (FAKITILLSAAAILMISQDYM), 108-128 (VLIILAVVGMMIMVSAGDLIA), 161-181 (FVLGALSSGLLLYGSSLAYGF), 196-216 (GGDMPLGLLFGLVFITAGLAF), 235-255 (PTPITALFATAPKVAAMALFA), 272-292 (IVAFLAVVSMFLGAIAAIGQT), 297-317 (LMAYSSISHMGFALMGLSAGT), 323-343 (AMLIYMAIYVAMNIGTFAFIL), 369-389 (ALAILVMMFSLAGVPPLLGFF), 402-422 (GLVWLAIAGVIASVIGAFYYI), and 442-462 (MGLVPYVGLIAMALVIGLGWV).

Belongs to the complex I subunit 2 family. In terms of assembly, NDH-1 is composed of 14 different subunits. Subunits NuoA, H, J, K, L, M, N constitute the membrane sector of the complex.

The protein localises to the cell inner membrane. It carries out the reaction a quinone + NADH + 5 H(+)(in) = a quinol + NAD(+) + 4 H(+)(out). NDH-1 shuttles electrons from NADH, via FMN and iron-sulfur (Fe-S) centers, to quinones in the respiratory chain. The immediate electron acceptor for the enzyme in this species is believed to be ubiquinone. Couples the redox reaction to proton translocation (for every two electrons transferred, four hydrogen ions are translocated across the cytoplasmic membrane), and thus conserves the redox energy in a proton gradient. This Jannaschia sp. (strain CCS1) protein is NADH-quinone oxidoreductase subunit N.